Reading from the N-terminus, the 515-residue chain is Maturase K (515 aa).

The protein belongs to the intron maturase 2 family. MatK subfamily.

The protein resides in the plastid. It localises to the chloroplast. Functionally, usually encoded in the trnK tRNA gene intron. Probably assists in splicing its own and other chloroplast group II introns. The polypeptide is Maturase K (Pinus yunnanensis (Yunnan pine)).